The following is a 1081-amino-acid chain: Importin-4 (1081 aa).

Methionine 1 carries the post-translational modification N-acetylmethionine. In terms of domain architecture, Importin N-terminal spans 24–90 (ATEQLQIVLR…KSLILTALQR (67 aa)). 6 HEAT repeats span residues 348–385 (KLCP…GAGD), 390–427 (RLLP…NLQP), 431–471 (SYSR…NLGP), 475–513 (PYLP…AAQA), 895–932 (QFVS…HGGH), and 936–974 (EHFP…ASPT).

It belongs to the importin beta family. In terms of assembly, found in a cytosolic complex with ASF1 (ASF1A or ASF1B) and histones H3 and H4.

Its subcellular location is the cytoplasm. The protein localises to the nucleus. Functionally, nuclear transport receptor that mediates nuclear import of proteins, such as histones, RPS3A, TNP2 and VDR. Serves as receptor for nuclear localization signals (NLS) in cargo substrates. Is thought to mediate docking of the importin/substrate complex to the nuclear pore complex (NPC) through binding to nucleoporin and the complex is subsequently translocated through the pore by an energy requiring, Ran-dependent mechanism. At the nucleoplasmic side of the NPC, Ran binds to the importin, the importin/substrate complex dissociates and importin is re-exported from the nucleus to the cytoplasm where GTP hydrolysis releases Ran. The directionality of nuclear import is thought to be conferred by an asymmetric distribution of the GTP- and GDP-bound forms of Ran between the cytoplasm and nucleus. Mediates the nuclear import of the histone H3-H4 dimer when in complex with ASF1 (ASF1A or ASF1B). Mediates the ligand-independent nuclear import of vitamin D receptor (VDR). In vitro, mediates the nuclear import of human cytomegalovirus UL84 by recognizing a non-classical NLS. The protein is Importin-4 (IPO4) of Homo sapiens (Human).